Here is a 163-residue protein sequence, read N- to C-terminus: Protein-export protein SecB (163 aa).

The protein belongs to the SecB family. As to quaternary structure, homotetramer, a dimer of dimers. One homotetramer interacts with 1 SecA dimer.

Its subcellular location is the cytoplasm. One of the proteins required for the normal export of preproteins out of the cell cytoplasm. It is a molecular chaperone that binds to a subset of precursor proteins, maintaining them in a translocation-competent state. It also specifically binds to its receptor SecA. The chain is Protein-export protein SecB from Shewanella woodyi (strain ATCC 51908 / MS32).